The sequence spans 1076 residues: Regulator of G-protein signaling protein-like (1076 aa).

The 120-residue stretch at 645 to 764 (NLTEVLLNTQ…LFPPHHQEVE (120 aa)) folds into the RGS domain. Over residues 834 to 852 (TTAHNTSGRSAPPSTNVRS) the composition is skewed to polar residues. The tract at residues 834–854 (TTAHNTSGRSAPPSTNVRSAD) is disordered. A helical transmembrane segment spans residues 960 to 982 (VFHGAIMSVFPVVMYFWKRFCFW).

The protein resides in the membrane. This chain is Regulator of G-protein signaling protein-like (RGSL1), found in Homo sapiens (Human).